The sequence spans 231 residues: 5'-methylthioadenosine/S-adenosylhomocysteine nucleosidase (231 aa).

Glu12 functions as the Proton acceptor in the catalytic mechanism. Substrate contacts are provided by residues Gly78, Val153, and 174–175; that span reads ME. Residue Asp198 is the Proton donor of the active site.

It belongs to the PNP/UDP phosphorylase family. MtnN subfamily.

The enzyme catalyses S-adenosyl-L-homocysteine + H2O = S-(5-deoxy-D-ribos-5-yl)-L-homocysteine + adenine. The catalysed reaction is S-methyl-5'-thioadenosine + H2O = 5-(methylsulfanyl)-D-ribose + adenine. It carries out the reaction 5'-deoxyadenosine + H2O = 5-deoxy-D-ribose + adenine. It functions in the pathway amino-acid biosynthesis; L-methionine biosynthesis via salvage pathway; S-methyl-5-thio-alpha-D-ribose 1-phosphate from S-methyl-5'-thioadenosine (hydrolase route): step 1/2. Its function is as follows. Catalyzes the irreversible cleavage of the glycosidic bond in both 5'-methylthioadenosine (MTA) and S-adenosylhomocysteine (SAH/AdoHcy) to adenine and the corresponding thioribose, 5'-methylthioribose and S-ribosylhomocysteine, respectively. Also cleaves 5'-deoxyadenosine, a toxic by-product of radical S-adenosylmethionine (SAM) enzymes, into 5-deoxyribose and adenine. The protein is 5'-methylthioadenosine/S-adenosylhomocysteine nucleosidase of Aliivibrio fischeri (Vibrio fischeri).